The chain runs to 440 residues: Transposon Ty1-ML1 Gag polyprotein (440 aa).

Composition is skewed to polar residues over residues 1 to 23 (MESQQLSNYPNISHGSACASVTS), 48 to 60 (TKANSQQTTTPAS), and 127 to 152 (QSQFPQYPSSVGTPLSTPSPESGNTF). 3 disordered regions span residues 1 to 88 (MESQ…YPQQ), 126 to 173 (PQSQ…RPPP), and 352 to 440 (GSRN…PETY). Positions 153–165 (TDSSSADSDMTST) are enriched in low complexity. The RNA-binding stretch occupies residues 299–401 (NNGIHINNKV…NSKSKTARAH (103 aa)). Residues 402 to 418 (NVSTSNNSPSTDNDSIS) show a composition bias toward low complexity. Serine 416 carries the post-translational modification Phosphoserine. Positions 419–428 (KSTTEPIQLN) are enriched in polar residues. Basic and acidic residues predominate over residues 429–440 (NKHDLHLRPETY).

As to quaternary structure, homotrimer.

It localises to the cytoplasm. Functionally, capsid protein (CA) is the structural component of the virus-like particle (VLP), forming the shell that encapsulates the retrotransposons dimeric RNA genome. The particles are assembled from trimer-clustered units and there are holes in the capsid shells that allow for the diffusion of macromolecules. CA also has nucleocapsid-like chaperone activity, promoting primer tRNA(i)-Met annealing to the multipartite primer-binding site (PBS), dimerization of Ty1 RNA and initiation of reverse transcription. The protein is Transposon Ty1-ML1 Gag polyprotein (TY1A-ML1) of Saccharomyces cerevisiae (strain ATCC 204508 / S288c) (Baker's yeast).